A 385-amino-acid chain; its full sequence is MEFNDVLTNQPICIDNGSGVIKAGFAGEDQPKSFFPSYVGRPKHLKIMAGAIEGDIFIGNKAQELRGLLKIKYPIEHGIVVDWDDMERIWQFIYTEELKTVSEEHPVLLTEAPLNPRTNRDQAAQVFFETFNVPALFTSIQAVLSLYASGRTTGVVLDSGDGVTHAVPIYEGFAMPSAIRRIDIAGRDVTEYLQLLLRKSGTIFHTSAEKEIVRIIKEKCSYVTLDPRKEEKEWINASISGGKDYTKEEEFKLPDGNVLRLGAERFRAPEILFDPEIIGSEYSGIHQVVVDAISRVDLDLRKSLFGNIVLSGGSTLTRGFGDRLLSEIRRLAVKDVKIKIFAPPERKYSTWIGGSILASLSTFRKMWVSAEEYQEDPDIIHRKSI.

Belongs to the actin family. ARP1 subfamily.

The protein localises to the cytoplasm. Its subcellular location is the cytoskeleton. The protein is Actin-2 of Pneumocystis carinii.